The chain runs to 440 residues: MGDLELLLPGEAEVLVRGLRSFQLREMGSEGWNKQHESLEKLNMQAILDATISQAEPIQELLINHGKIPTLVEELIAVEMWKQKVFPVLCRLEDFKPQNTFPIYMVVHHEASIINLLETVFFHKEVCESADDKVLDLVDYCHRKLILLVARKGGGDLSEEEQFQDSTPMQELQKQAEMMEFEISLKALSVLRYITDCVDSLSLSTLNRMLRTHNLPCLLVELLEHSPWSRRVGGKLQHFESGRWQTVAPSEQQKLNKLDGQVWIALYNLLLSPEARARYCLTSFAKGQLLKLQAFLTDTLLDQLPNLADLKGFLAHLSLAETQPPKKDLVLEQIPEIWDRLERENKGKWQAIAKHQLQHVFSLSEKDLRQQAQRWAETYRLDVLEAVAPERPRCGYCNAEASKRCSRCQNVWYCCRECQVKHWEKHGKTCVLAAQGDRAK.

Residues C394, C397, C405, C408, C414, C418, H426, and C430 each contribute to the Zn(2+) site. The segment at 394 to 430 (CGYCNAEASKRCSRCQNVWYCCRECQVKHWEKHGKTC) adopts an MYND-type zinc-finger fold.

Belongs to the ZMYND10 family. Interacts (via C-terminus) with DNAAF11 (via CS domain); this interaction stabilizes DNAAF11 at the protein level. Interacts (via C-terminus) with DNAL1; this interaction stabilizes DNAL1 at the protein level. Interacts with DNAAF4, HSPA8, IQUB, RUVBL2 and DYNTL5. Expressed in the testis. Expressed in the tracheal epithelium. Restricted to regions containing motile cilia.

It is found in the cytoplasm. The protein localises to the cytoskeleton. The protein resides in the microtubule organizing center. It localises to the centrosome. Its subcellular location is the centriolar satellite. It is found in the apical cell membrane. The protein localises to the dynein axonemal particle. In terms of biological role, plays a role in axonemal structure organization and motility. Involved in axonemal pre-assembly of inner and outer dynein arms (IDA and ODA, respectively) for proper axoneme building for cilia motility. May act by indirectly regulating transcription of dynein proteins. The chain is Zinc finger MYND domain-containing protein 10 (Zmynd10) from Mus musculus (Mouse).